The primary structure comprises 230 residues: N-(5'-phosphoribosyl)anthranilate isomerase (230 aa).

The protein belongs to the TrpF family.

The enzyme catalyses N-(5-phospho-beta-D-ribosyl)anthranilate = 1-(2-carboxyphenylamino)-1-deoxy-D-ribulose 5-phosphate. Its pathway is amino-acid biosynthesis; L-tryptophan biosynthesis; L-tryptophan from chorismate: step 3/5. The sequence is that of N-(5'-phosphoribosyl)anthranilate isomerase from Thermosynechococcus vestitus (strain NIES-2133 / IAM M-273 / BP-1).